Consider the following 504-residue polypeptide: Cobyric acid synthase (504 aa).

Residues 258–454 enclose the GATase cobBQ-type domain; the sequence is EIEIAIIKLP…LHGIFENDEW (197 aa). The Nucleophile role is filled by Cys339. His446 is an active-site residue.

Belongs to the CobB/CobQ family. CobQ subfamily.

Its pathway is cofactor biosynthesis; adenosylcobalamin biosynthesis. In terms of biological role, catalyzes amidations at positions B, D, E, and G on adenosylcobyrinic A,C-diamide. NH(2) groups are provided by glutamine, and one molecule of ATP is hydrogenolyzed for each amidation. This chain is Cobyric acid synthase, found in Prochlorococcus marinus (strain NATL2A).